A 669-amino-acid chain; its full sequence is Alpha-1,4-glucan:maltose-1-phosphate maltosyltransferase 2 (669 aa).

Alpha-maltose 1-phosphate contacts are provided by K255, Q315, and D350. Residue D385 is the Nucleophile of the active site. Residue N386 participates in alpha-maltose 1-phosphate binding. E414 (proton donor) is an active-site residue. An alpha-maltose 1-phosphate-binding site is contributed by 525-526 (KY).

Belongs to the glycosyl hydrolase 13 family. GlgE subfamily. In terms of assembly, homodimer.

It carries out the reaction alpha-maltose 1-phosphate + [(1-&gt;4)-alpha-D-glucosyl](n) = [(1-&gt;4)-alpha-D-glucosyl](n+2) + phosphate. Maltosyltransferase that uses maltose 1-phosphate (M1P) as the sugar donor to elongate linear or branched alpha-(1-&gt;4)-glucans. Maltooligosaccharides with a degree of polymerization (DP) superior or equal to 4 are efficient acceptors, with DP6 being optimal in the GlgE-catalyzed polymerization with M1P. Is probably involved in a branched alpha-glucan biosynthetic pathway from trehalose, together with TreS, Mak and GlgB. This is Alpha-1,4-glucan:maltose-1-phosphate maltosyltransferase 2 (glgE2) from Streptomyces coelicolor (strain ATCC BAA-471 / A3(2) / M145).